The chain runs to 229 residues: MDICLEKIKIEQTWKEFLKDEFLKPYFLEIKTHYINALNEGKTIYPPANLIFNAFNLAPLQDLKIILLGQDPYHNPHQAMGLSFSVPMGVKIPPSLLNIYKELQNDLNIPMAKHGDLSKWAKQGVLLLNSILSVEANKPASHAHFGWQKFTDAVISKLSDEKEGLVFLLWGNYAKNKKVLINPQKHFILEAAHPSPLARNAFLGCKHFSKSNEILLKLGKSPIDWNLNL.

The active-site Proton acceptor is Asp71.

Belongs to the uracil-DNA glycosylase (UDG) superfamily. UNG family.

It is found in the cytoplasm. It catalyses the reaction Hydrolyzes single-stranded DNA or mismatched double-stranded DNA and polynucleotides, releasing free uracil.. Functionally, excises uracil residues from the DNA which can arise as a result of misincorporation of dUMP residues by DNA polymerase or due to deamination of cytosine. In Campylobacter lari (strain RM2100 / D67 / ATCC BAA-1060), this protein is Uracil-DNA glycosylase.